An 889-amino-acid polypeptide reads, in one-letter code: Voltage-gated potassium channel KCNC3 (889 aa).

Residues Met-1–Gly-80 are important for normal N-type inactivation. At Met-1–Arg-291 the chain is on the cytoplasmic side. The tract at residues Phe-10–Arg-66 is disordered. Positions Ala-24–Gln-42 are enriched in pro residues. Zn(2+)-binding residues include His-159, Cys-165, Cys-186, and Cys-187. The tract at residues Asp-202 to Ala-231 is disordered. Low complexity predominate over residues Gly-211–Asp-222. The chain crosses the membrane as a helical span at residues Tyr-292–Leu-310. Asn-321 carries an N-linked (GlcNAc...) asparagine glycan. A helical transmembrane segment spans residues Val-352–Cys-371. Over Pro-372–Ser-380 the chain is Cytoplasmic. A helical membrane pass occupies residues Ser-381–Leu-399. The helical; Voltage-sensor transmembrane segment at Phe-413–Leu-435 threads the bilayer. The Cytoplasmic segment spans residues Arg-436–Glu-448. A helical transmembrane segment spans residues Phe-449–Ala-470. 4 residues coordinate K(+): Thr-504, Leu-505, Gly-506, and Tyr-507. Residues Thr-504 to Asp-509 carry the Selectivity filter motif. Residues Leu-519–Val-540 traverse the membrane as a helical segment. Residues Asn-541–Val-889 lie on the Cytoplasmic side of the membrane. Disordered stretches follow at residues Pro-557 to Gly-627, Ile-691 to Leu-834, and Thr-852 to Val-889. Arg-626 is subject to Omega-N-methylarginine. Residues Ser-697 and Ser-702 each carry the phosphoserine modification. Residues Ser-748–Pro-764 show a composition bias toward low complexity. Thr-759 carries the post-translational modification Phosphothreonine. The segment covering His-794 to Arg-808 has biased composition (basic residues).

This sequence belongs to the potassium channel family. C (Shaw) (TC 1.A.1.2) subfamily. Kv3.3/KCNC3 sub-subfamily. Homotetramer. Heterotetramer with KCNC1. Interacts (via C-terminus) with HAX1; this interaction modulates channel gating. Identified in a complex with ACTR3, a subunit of the Arp2/3 complex; this interaction is indirect and depends on the presence of HAX1. N-glycosylated. Detected on Purkinje cells in the cerebellum molecular layer (at protein level).

The protein localises to the cell membrane. It is found in the presynaptic cell membrane. It localises to the perikaryon. The protein resides in the cell projection. Its subcellular location is the axon. The protein localises to the dendrite. It is found in the dendritic spine membrane. It localises to the cytoplasm. The protein resides in the cell cortex. Its subcellular location is the cytoskeleton. It catalyses the reaction K(+)(in) = K(+)(out). In terms of biological role, voltage-gated potassium channel that plays an important role in the rapid repolarization of fast-firing brain neurons. The channel opens in response to the voltage difference across the membrane, forming a potassium-selective channel through which potassium ions pass in accordance with their electrochemical gradient. The channel displays rapid activation and inactivation kinetics. It plays a role in the regulation of the frequency, shape and duration of action potentials in Purkinje cells. Required for normal survival of cerebellar neurons, probably via its role in regulating the duration and frequency of action potentials that in turn regulate the activity of voltage-gated Ca(2+) channels and cellular Ca(2+) homeostasis. Required for normal motor function. Plays a role in the reorganization of the cortical actin cytoskeleton and the formation of actin veil structures in neuronal growth cones via its interaction with HAX1 and the Arp2/3 complex. The polypeptide is Voltage-gated potassium channel KCNC3 (Rattus norvegicus (Rat)).